A 740-amino-acid chain; its full sequence is Elongation factor 2 (740 aa).

One can recognise a tr-type G domain in the interval 23 to 264 (AQIRNAGTLA…MIIEHVPPPN (242 aa)). GTP contacts are provided by residues 32-39 (AHVDHGKT), 98-102 (DTPGH), and 152-155 (NKID). His-605 bears the Diphthamide mark.

This sequence belongs to the TRAFAC class translation factor GTPase superfamily. Classic translation factor GTPase family. EF-G/EF-2 subfamily.

It is found in the cytoplasm. Catalyzes the GTP-dependent ribosomal translocation step during translation elongation. During this step, the ribosome changes from the pre-translocational (PRE) to the post-translocational (POST) state as the newly formed A-site-bound peptidyl-tRNA and P-site-bound deacylated tRNA move to the P and E sites, respectively. Catalyzes the coordinated movement of the two tRNA molecules, the mRNA and conformational changes in the ribosome. In Pyrobaculum arsenaticum (strain DSM 13514 / JCM 11321 / PZ6), this protein is Elongation factor 2.